The chain runs to 414 residues: Putative truncated GMC-type inactive oxidoreductase R832 (414 aa).

Positions 1–20 are cleaved as a signal peptide; sequence MNPTKLFLVFVAFAFAIINA. An FAD-binding site is contributed by 38–67; it reads DYIIVGSGPGGSRAVQQCIAKGHKCTLVER.

The protein belongs to the GMC oxidoreductase family. FAD serves as cofactor.

The sequence is that of Putative truncated GMC-type inactive oxidoreductase R832 from Acanthamoeba polyphaga (Amoeba).